Reading from the N-terminus, the 222-residue chain is UPF0128 protein TK2294 (222 aa).

This sequence belongs to the UPF0128 family.

The chain is UPF0128 protein TK2294 from Thermococcus kodakarensis (strain ATCC BAA-918 / JCM 12380 / KOD1) (Pyrococcus kodakaraensis (strain KOD1)).